A 103-amino-acid chain; its full sequence is MSTLADQALHNNNVGPIIRAGDLVEPVIETAEIDNPGKEITVEDRRAYVRIAAEGELILTRKTLEEQLGRPFNMQELEINLASFAGQIQADEDQIRFYFDKTM.

The protein belongs to the TmoD/XamoD family. As to quaternary structure, the alkene monooxygenase multicomponent enzyme system is composed of an electron transfer component and a monooxygenase component interacting with the effector protein TmoD. The electron transfer component is composed of a ferredoxin reductase (TmoF) and a ferredoxin (TmoC), and the monooxygenase component is formed by a heterohexamer (dimer of heterotrimers) of two alpha subunits (TmoA), two beta subunits (TmoE) and two gamma subunits (TmoB).

The protein operates within xenobiotic degradation; toluene degradation. Its function is as follows. Effector component of the toluene-4-monooxygenase multicomponent enzyme system which catalyzes the O2- and NADH-dependent hydroxylation of toluene to form p-cresol. Required for optimal efficiency and specificity of the holoenzyme. This is Toluene-4-monooxygenase system, effector component from Ectopseudomonas mendocina (Pseudomonas mendocina).